The chain runs to 878 residues: E3 ubiquitin-protein ligase SH3RF3 (878 aa).

Positions 19–40 (RGEGEDRQGEQQRGAQARTEED) are disordered. The RING-type zinc-finger motif lies at 52–93 (CSVCLERLDTTAKVLPCQHTFCRRCLESIVCSRHELRCPECR). Positions 120–145 (PRTGASPGSSPPARPGPGTFSALAGG) are disordered. SH3 domains are found at residues 187 to 246 (SQLP…CVRP) and 249 to 312 (QALP…LNDS). Residues 364–433 (RVDSKKNAKK…TVPTQDSSSA (70 aa)) are interaction with RAC1. The residue at position 395 (S395) is a Phosphoserine. The region spanning 458-519 (LPLNVYLALY…PGNYVTPVSR (62 aa)) is the SH3 3 domain. Disordered regions lie at residues 574–659 (QHPA…CPRP) and 688–758 (PISG…MGPE). Composition is skewed to polar residues over residues 590–609 (AQPT…THAS), 618–633 (ATVS…SRLP), 643–653 (ASPQHGQQSPA), and 690–699 (SGLSTPSLIN). Residues 703 to 716 (KPDDKKNEKKEKKS) are compositionally biased toward basic and acidic residues. A compositionally biased stretch (polar residues) spans 741–752 (HDPQSAMDTSLQ). S792 carries the post-translational modification Phosphoserine. Positions 819 to 878 (LPRERYRVVVSYPPQSEAEIELKEGDIVFVHKKHEDGWFKGTLQRNGRTGLFPGSFVESF) constitute an SH3 4 domain.

Belongs to the SH3RF family. Interacts (via SH3 domain 3) with PAK2. Interacts with RAC1 (GTP-bound form). Post-translationally, autoubiquitinated.

It catalyses the reaction S-ubiquitinyl-[E2 ubiquitin-conjugating enzyme]-L-cysteine + [acceptor protein]-L-lysine = [E2 ubiquitin-conjugating enzyme]-L-cysteine + N(6)-ubiquitinyl-[acceptor protein]-L-lysine.. The protein operates within protein modification; protein ubiquitination. Functionally, has E3 ubiquitin-protein ligase activity. The chain is E3 ubiquitin-protein ligase SH3RF3 (Sh3rf3) from Mus musculus (Mouse).